The following is a 284-amino-acid chain: 2-dehydro-3-deoxyphosphooctonate aldolase (284 aa).

It belongs to the KdsA family.

The protein localises to the cytoplasm. It carries out the reaction D-arabinose 5-phosphate + phosphoenolpyruvate + H2O = 3-deoxy-alpha-D-manno-2-octulosonate-8-phosphate + phosphate. It functions in the pathway carbohydrate biosynthesis; 3-deoxy-D-manno-octulosonate biosynthesis; 3-deoxy-D-manno-octulosonate from D-ribulose 5-phosphate: step 2/3. The protein operates within bacterial outer membrane biogenesis; lipopolysaccharide biosynthesis. This Edwardsiella ictaluri (strain 93-146) protein is 2-dehydro-3-deoxyphosphooctonate aldolase.